The chain runs to 222 residues: Cyclin-dependent kinase inhibitor 3 (222 aa).

Positions 68-101 are disordered; it reads KPSSLIEPKQPPRVHRSGIKESGSRSRVDSVNSV. A compositionally biased stretch (basic and acidic residues) spans 85–95; sequence GIKESGSRSRV.

This sequence belongs to the CDI family. ICK/KRP subfamily. In terms of assembly, specifically interacts with CDKA-1, but not with CDKB1-1.

It is found in the nucleus. It localises to the nucleoplasm. Binds and inhibits CYCD2-1/CDKA-1 complex kinase activity. May target specifically CDKA-1. This Arabidopsis thaliana (Mouse-ear cress) protein is Cyclin-dependent kinase inhibitor 3 (KRP3).